Reading from the N-terminus, the 473-residue chain is ATP synthase subunit beta, chloroplastic (473 aa).

ATP is bound at residue 172-179; sequence GGAGVGKT.

Belongs to the ATPase alpha/beta chains family. As to quaternary structure, F-type ATPases have 2 components, CF(1) - the catalytic core - and CF(0) - the membrane proton channel. CF(1) has five subunits: alpha(3), beta(3), gamma(1), delta(1), epsilon(1). CF(0) has four main subunits: a(1), b(1), b'(1) and c(9-12).

The protein localises to the plastid. It localises to the chloroplast thylakoid membrane. It carries out the reaction ATP + H2O + 4 H(+)(in) = ADP + phosphate + 5 H(+)(out). Functionally, produces ATP from ADP in the presence of a proton gradient across the membrane. The catalytic sites are hosted primarily by the beta subunits. The sequence is that of ATP synthase subunit beta, chloroplastic from Pteridium esculentum (Bracken fern).